A 517-amino-acid chain; its full sequence is G-protein coupled receptor Mth (517 aa).

Positions 1 to 27 are cleaved as a signal peptide; that stretch reads MKLFWVKRLLRISTVVVTLLLLQRTNA. The Extracellular segment spans residues 28-221; the sequence is AIPDCDYYDT…CLISPSRMGQ (194 aa). 5 cysteine pairs are disulfide-bonded: Cys32-Cys86, Cys88-Cys93, Cys97-Cys191, Cys98-Cys109, and Cys153-Cys212. Residues Asn48 and Asn61 are each glycosylated (N-linked (GlcNAc...) asparagine). N-linked (GlcNAc...) asparagine glycans are attached at residues Asn126, Asn173, and Asn201. The chain crosses the membrane as a helical span at residues 222–242; it reads TVVMITSLVCMVLTITVYLFV. Residues 243–251 lie on the Cytoplasmic side of the membrane; sequence KKLQNLHGK. The chain crosses the membrane as a helical span at residues 252–272; it reads CFMCYMVCLFMAYLLLLLNLW. Residues 273–279 lie on the Extracellular side of the membrane; sequence QMSQNFC. A helical membrane pass occupies residues 280–300; the sequence is ITAGFLGYFFVMAAFLWLSVI. The Cytoplasmic portion of the chain corresponds to 301–323; that stretch reads SLHLWNTFSGSAHNANRFLSEHR. The chain crosses the membrane as a helical span at residues 324 to 344; it reads FLAYNTYAWGMAVVLTGITYL. Topologically, residues 345 to 373 are extracellular; it reads ADKVVENEDWNPRMGFGGHCWICTQSWSA. A helical membrane pass occupies residues 374–394; that stretch reads MLYFYGPMVFLIAFNITMFIL. At 395–427 the chain is on the cytoplasmic side; it reads TANRIIGVKKDIQKFAHRQERKQKLNSDKQTYT. Residues 428–448 form a helical membrane-spanning segment; the sequence is FFLRLFIIMGLTWSLEIGSYI. The Extracellular segment spans residues 449–457; sequence SQFNQTWSN. Asn452 carries N-linked (GlcNAc...) asparagine glycosylation. Residues 458-478 traverse the membrane as a helical segment; sequence VFLVADYLNWSQGIIIFILFV. Residues 479 to 517 are Cytoplasmic-facing; sequence LKRSTLRLLMESIRGEGEEVNDSEEEISLENTKYDRNVL.

It belongs to the G-protein coupled receptor 2 family. Mth subfamily. As to quaternary structure, homodimer.

Its subcellular location is the cell membrane. In terms of biological role, involved in biological aging and stress response. Essential for adult survival. The protein is G-protein coupled receptor Mth (mth) of Drosophila yakuba (Fruit fly).